The chain runs to 354 residues: Uroporphyrinogen decarboxylase (354 aa).

Substrate contacts are provided by residues 27-31, D77, Y154, T209, and H327; that span reads RQAGR.

The protein belongs to the uroporphyrinogen decarboxylase family. As to quaternary structure, homodimer.

The protein resides in the cytoplasm. The catalysed reaction is uroporphyrinogen III + 4 H(+) = coproporphyrinogen III + 4 CO2. Its pathway is porphyrin-containing compound metabolism; protoporphyrin-IX biosynthesis; coproporphyrinogen-III from 5-aminolevulinate: step 4/4. In terms of biological role, catalyzes the decarboxylation of four acetate groups of uroporphyrinogen-III to yield coproporphyrinogen-III. The sequence is that of Uroporphyrinogen decarboxylase from Cronobacter sakazakii (strain ATCC BAA-894) (Enterobacter sakazakii).